Reading from the N-terminus, the 265-residue chain is MRLYRDRAVVLRQHKLGEADRIVTLLTRDHGLVRAVAKGVRRTRSKFGSRLEPFAHIDAQLHPGRNLDIVTQVVSIDAFAADIVNDYGRYTCGCAMLETAERLAGEERAPAPALHRLTVGALRAVADGSRPRDLLLDAYLLRAMGIAGWAPALTECARCATPGPHRAFHIAAGGSVCPHCRPAGSTTPPLGVLDLMSALHDGDWEAAQGAPQSHRSYVSGLVAAHLQWHLERQLKTLPLVERFYQADRSVAERRAALIGQDSECG.

Belongs to the RecO family.

Involved in DNA repair and RecF pathway recombination. In Mycobacterium marinum (strain ATCC BAA-535 / M), this protein is DNA repair protein RecO.